Reading from the N-terminus, the 133-residue chain is Histone H2A.Z (133 aa).

Residues 1 to 11 (MSGKGKVHGGK) show a composition bias toward basic residues. The disordered stretch occupies residues 1–30 (MSGKGKVHGGKGKSSDSAKASTSHSARAGL). Serine 2 is subject to N-acetylserine. An N6-acetyllysine mark is found at lysine 4, lysine 11, and lysine 13. The span at 15 to 26 (SDSAKASTSHSA) shows a compositional bias: low complexity.

This sequence belongs to the histone H2A family. In terms of assembly, the nucleosome is a histone octamer containing two molecules each of H2A, H2B, H3 and H4 assembled in one H3-H4 heterotetramer and two H2A-H2B heterodimers. The octamer wraps approximately 147 bp of DNA. H2A or its variant H2A.Z forms a heterodimer with H2B. H2A.Z associates with the VPS72/SWC2 subunit of the SWR1 chromatin remodeling complex. Also interacts with RBP1/DNA-directed RNA polymerase II largest subunit. Acetylated once deposited into chromatin.

Its subcellular location is the nucleus. It is found in the chromosome. Variant histone H2A which can replace H2A in some nucleosomes. Nucleosomes wrap and compact DNA into chromatin, limiting DNA accessibility to the cellular machineries which require DNA as a template. Histones thereby play a central role in transcription regulation, DNA repair, DNA replication and chromosomal stability. DNA accessibility is regulated via a complex set of post-translational modifications of histones, also called histone code, and nucleosome remodeling. This variant is enriched at promoters, it may keep them in a repressed state until the appropriate activation signal is received. Near telomeres, it may counteract gene silencing caused by the spread of heterochromatin proteins. Required for the RNA polymerase II and SPT15/TBP recruitment to the target genes. Involved in chromosome stability. The chain is Histone H2A.Z (HTZ1) from Meyerozyma guilliermondii (strain ATCC 6260 / CBS 566 / DSM 6381 / JCM 1539 / NBRC 10279 / NRRL Y-324) (Yeast).